Here is a 509-residue protein sequence, read N- to C-terminus: MNEQQRLASRQANSSTKKEEKDYSKYFESVYQPPSLKLAKKRGKEEVKIERDFGLPEEFRDFGAGRKFYIRTYGCQMNEHDTEVMAGIFTTLGYEPTFSTEEADVILLNTCAIRENAENKVFGELGHLKSLKRRNPDLIIGVCGCMSQEESVVNKIMQKNQHVDMVFGTHNIHRLPYILKDAMFSKETVVEVWSKEGDVIENLPKVRRGDIKAWVNIMYGCDKFCTYCIVPYTRGKERSRRPEDIIKEIRHLAANGYKEITLLGQNVNAYGKDFEDIQYGLGDLMDELRKIDIARIRFTTSHPRDFDDHLIDVLGKGGNLVEHIHLPVQSGSTDMLKIMARKYSREHYLELVRKIKETIPNAVLTTDIIVGFPNETDEQFEETMSLYREVGFDTAFTFIYSPREGTPAAKMQDNVPMEVKKERLQRLNTLVNEYGVNKNKRYIGQIVEVLVEGESKNNPEVLAGYTRTNKLVNFVASKSLIGQLVKVKITEAKTWSLNGELVKEPIEVK.

The span at 1-15 (MNEQQRLASRQANSS) shows a compositional bias: polar residues. Residues 1–25 (MNEQQRLASRQANSSTKKEEKDYSK) form a disordered region. Positions 16-25 (TKKEEKDYSK) are enriched in basic and acidic residues. Residues 66–184 (RKFYIRTYGC…LPYILKDAMF (119 aa)) enclose the MTTase N-terminal domain. Cys75, Cys111, Cys145, Cys221, Cys225, and Cys228 together coordinate [4Fe-4S] cluster. Residues 207 to 437 (RRGDIKAWVN…NTLVNEYGVN (231 aa)) enclose the Radical SAM core domain. In terms of domain architecture, TRAM spans 440-503 (KRYIGQIVEV…TWSLNGELVK (64 aa)).

It belongs to the methylthiotransferase family. MiaB subfamily. Monomer. Requires [4Fe-4S] cluster as cofactor.

It is found in the cytoplasm. It carries out the reaction N(6)-dimethylallyladenosine(37) in tRNA + (sulfur carrier)-SH + AH2 + 2 S-adenosyl-L-methionine = 2-methylsulfanyl-N(6)-dimethylallyladenosine(37) in tRNA + (sulfur carrier)-H + 5'-deoxyadenosine + L-methionine + A + S-adenosyl-L-homocysteine + 2 H(+). Catalyzes the methylthiolation of N6-(dimethylallyl)adenosine (i(6)A), leading to the formation of 2-methylthio-N6-(dimethylallyl)adenosine (ms(2)i(6)A) at position 37 in tRNAs that read codons beginning with uridine. The sequence is that of tRNA-2-methylthio-N(6)-dimethylallyladenosine synthase from Bacillus mycoides (strain KBAB4) (Bacillus weihenstephanensis).